A 239-amino-acid chain; its full sequence is Trimethylguanosine synthase (239 aa).

This sequence belongs to the methyltransferase superfamily. Trimethylguanosine synthase family. In terms of assembly, monomer. Interacts with mug174; both proteins are required to maintain Cajal body integrity.

It is found in the nucleus. The protein resides in the cajal body. The enzyme catalyses a 5'-end (N(7)-methyl 5'-triphosphoguanosine)-ribonucleoside in snRNA + S-adenosyl-L-methionine = a 5'-end (N(2),N(7)-dimethyl 5'-triphosphoguanosine)-ribonucleoside in snRNA + S-adenosyl-L-homocysteine + H(+). It carries out the reaction a 5'-end (N(7)-methyl 5'-triphosphoguanosine)-ribonucleoside in snoRNA + S-adenosyl-L-methionine = a 5'-end (N(2),N(7)-dimethyl 5'-triphosphoguanosine)-ribonucleoside in snoRNA + S-adenosyl-L-homocysteine + H(+). It catalyses the reaction a 5'-end (N(2),N(7)-dimethyl 5'-triphosphoguanosine)-ribonucleoside in snRNA + S-adenosyl-L-methionine = a 5'-end (N(2),N(2),N(7)-trimethyl 5'-triphosphoguanosine)-ribonucleoside in snRNA + S-adenosyl-L-homocysteine + H(+). The catalysed reaction is a 5'-end (N(2),N(7)-dimethyl 5'-triphosphoguanosine)-ribonucleoside in snoRNA + S-adenosyl-L-methionine = a 5'-end (N(2),N(2),N(7)-trimethyl 5'-triphosphoguanosine)-ribonucleoside in snoRNA + S-adenosyl-L-homocysteine + H(+). Substrate inhibited by S-adenosyl-L-homocysteine. Its function is as follows. Catalyzes the two serial methylation steps for the conversion of the 7-monomethylguanosine (m(7)G) caps of snRNAs and snoRNAs to a 2,2,7-trimethylguanosine (m(2,2,7)G) cap structure. The enzyme is specific for guanine, and N7 methylation must precede N2 methylation. Required for pre-mRNA splicing, pre-rRNA processing and small ribosomal subunit synthesis. Involved in nucleolar structural organization. The polypeptide is Trimethylguanosine synthase (tgs1) (Schizosaccharomyces pombe (strain 972 / ATCC 24843) (Fission yeast)).